The primary structure comprises 458 residues: Dynein regulatory complex protein 10 (458 aa).

Coiled coils occupy residues 96–137, 209–255, and 285–379; these read GQTL…HKVN, IQDI…KNHL, and QVRL…IRAE. The 30-residue stretch at 397-426 folds into the IQ domain; that stretch reads MVRAATLIQAVWKGYLVRSILRSKKKKRGK. The segment at 419 to 458 is disordered; sequence SKKKKRGKGKGKDKGKGKEKPKEEKAKEKKPKAKGKGKKK. Basic and acidic residues predominate over residues 428–445; it reads KGKDKGKGKEKPKEEKAK. Residues 446–458 are compositionally biased toward basic residues; sequence EKKPKAKGKGKKK.

It belongs to the DRC10 family. As to quaternary structure, component of the nexin-dynein regulatory complex (N-DRC). Interacts with CFAP52.

It localises to the cytoplasm. It is found in the cytoskeleton. The protein resides in the flagellum axoneme. Component of the nexin-dynein regulatory complex (N-DRC), a key regulator of ciliary/flagellar motility which maintains the alignment and integrity of the distal axoneme and regulates microtubule sliding in motile axonemes. The protein is Dynein regulatory complex protein 10 (Iqcd) of Mus musculus (Mouse).